A 386-amino-acid chain; its full sequence is uncharacterized protein (386 aa).

K185 is modified (N6-(pyridoxal phosphate)lysine).

It belongs to the DegT/DnrJ/EryC1 family. The cofactor is pyridoxal 5'-phosphate.

This is an uncharacterized protein from Methanocaldococcus jannaschii (strain ATCC 43067 / DSM 2661 / JAL-1 / JCM 10045 / NBRC 100440) (Methanococcus jannaschii).